The primary structure comprises 316 residues: MTSTPADALRELEARVRDLEATAERTGQNLDAALAPLRTQLETLRREHAAGLSRWDRVQLARTPGRPTALDYVDRLCSDWTELHGDRRFGDDPALIGGPARWQGRPVMLLLQQKGRDTKTKIKRRFGSANPEGYRKAIRLMDLADRFGLPVVSLIDTQGAYPGLEAEERGQGWAIAESIQRMVRLRVPAVCAVIGEGGSGGALAIGVGNRVLIQENAWYSVISPEGAASILWRDAAQAPLAAEALRVTAADLLDMGIVEEVVPEPPGGAHLDMDAAAEALGSVISRHLDDLSALTPDDLLAQRAARFRSLGAFEER.

Positions 36–290 (PLRTQLETLR…GSVISRHLDD (255 aa)) constitute a CoA carboxyltransferase C-terminal domain.

Belongs to the AccA family. In terms of assembly, acetyl-CoA carboxylase is a heterohexamer composed of biotin carboxyl carrier protein (AccB), biotin carboxylase (AccC) and two subunits each of ACCase subunit alpha (AccA) and ACCase subunit beta (AccD).

It is found in the cytoplasm. The enzyme catalyses N(6)-carboxybiotinyl-L-lysyl-[protein] + acetyl-CoA = N(6)-biotinyl-L-lysyl-[protein] + malonyl-CoA. The protein operates within lipid metabolism; malonyl-CoA biosynthesis; malonyl-CoA from acetyl-CoA: step 1/1. Component of the acetyl coenzyme A carboxylase (ACC) complex. First, biotin carboxylase catalyzes the carboxylation of biotin on its carrier protein (BCCP) and then the CO(2) group is transferred by the carboxyltransferase to acetyl-CoA to form malonyl-CoA. This Deinococcus radiodurans (strain ATCC 13939 / DSM 20539 / JCM 16871 / CCUG 27074 / LMG 4051 / NBRC 15346 / NCIMB 9279 / VKM B-1422 / R1) protein is Acetyl-coenzyme A carboxylase carboxyl transferase subunit alpha.